A 138-amino-acid polypeptide reads, in one-letter code: Protein PsiE homolog (138 aa).

4 helical membrane passes run 12 to 34 (YLLQ…ALLI), 56 to 76 (YEML…ALII), 84 to 104 (HFPL…LIII), and 109 to 129 (AIST…FFIA).

It belongs to the PsiE family.

The protein resides in the cell membrane. In Bacillus subtilis (strain 168), this protein is Protein PsiE homolog.